Consider the following 71-residue polypeptide: Cytochrome c oxidase subunit 8C, mitochondrial (71 aa).

The N-terminal 28 residues, 1 to 28 (MAHLPRVCPFIRRLRVALLCLRPGHRFA), are a transit peptide targeting the mitochondrion. The Mitochondrial matrix segment spans residues 29–39 (HSEPQRQRPAS). A helical membrane pass occupies residues 40 to 63 (ALEMAVGIVVIFSAFLTPSAYVLS). The Mitochondrial intermembrane portion of the chain corresponds to 64 to 71 (NLSQFRRE).

The protein belongs to the cytochrome c oxidase VIII family. As to quaternary structure, component of the cytochrome c oxidase (complex IV, CIV), a multisubunit enzyme composed of 14 subunits. The complex is composed of a catalytic core of 3 subunits MT-CO1, MT-CO2 and MT-CO3, encoded in the mitochondrial DNA, and 11 supernumerary subunits COX4I, COX5A, COX5B, COX6A, COX6B, COX6C, COX7A, COX7B, COX7C, COX8 and NDUFA4, which are encoded in the nuclear genome. The complex exists as a monomer or a dimer and forms supercomplexes (SCs) in the inner mitochondrial membrane with NADH-ubiquinone oxidoreductase (complex I, CI) and ubiquinol-cytochrome c oxidoreductase (cytochrome b-c1 complex, complex III, CIII), resulting in different assemblies (supercomplex SCI(1)III(2)IV(1) and megacomplex MCI(2)III(2)IV(2)).

Its subcellular location is the mitochondrion inner membrane. It participates in energy metabolism; oxidative phosphorylation. Functionally, component of the cytochrome c oxidase, the last enzyme in the mitochondrial electron transport chain which drives oxidative phosphorylation. The respiratory chain contains 3 multisubunit complexes succinate dehydrogenase (complex II, CII), ubiquinol-cytochrome c oxidoreductase (cytochrome b-c1 complex, complex III, CIII) and cytochrome c oxidase (complex IV, CIV), that cooperate to transfer electrons derived from NADH and succinate to molecular oxygen, creating an electrochemical gradient over the inner membrane that drives transmembrane transport and the ATP synthase. Cytochrome c oxidase is the component of the respiratory chain that catalyzes the reduction of oxygen to water. Electrons originating from reduced cytochrome c in the intermembrane space (IMS) are transferred via the dinuclear copper A center (CU(A)) of subunit 2 and heme A of subunit 1 to the active site in subunit 1, a binuclear center (BNC) formed by heme A3 and copper B (CU(B)). The BNC reduces molecular oxygen to 2 water molecules using 4 electrons from cytochrome c in the IMS and 4 protons from the mitochondrial matrix. This chain is Cytochrome c oxidase subunit 8C, mitochondrial (COX8C), found in Eulemur fulvus fulvus (Brown lemur).